The chain runs to 427 residues: Proline--tRNA ligase (427 aa).

It belongs to the class-II aminoacyl-tRNA synthetase family. ProS type 2 subfamily. As to quaternary structure, homodimer.

Its subcellular location is the cytoplasm. The catalysed reaction is tRNA(Pro) + L-proline + ATP = L-prolyl-tRNA(Pro) + AMP + diphosphate. In terms of biological role, catalyzes the attachment of proline to tRNA(Pro) in a two-step reaction: proline is first activated by ATP to form Pro-AMP and then transferred to the acceptor end of tRNA(Pro). This is Proline--tRNA ligase from Rickettsia akari (strain Hartford).